A 202-amino-acid chain; its full sequence is Recombination protein RecR (202 aa).

The C4-type zinc-finger motif lies at 59–74 (CSVCFHLSAEPVCEIC). The Toprim domain maps to 82–176 (HTICVVADSR…KVTRIAFGLP (95 aa)).

This sequence belongs to the RecR family.

May play a role in DNA repair. It seems to be involved in an RecBC-independent recombinational process of DNA repair. It may act with RecF and RecO. This chain is Recombination protein RecR, found in Thermosynechococcus vestitus (strain NIES-2133 / IAM M-273 / BP-1).